The sequence spans 843 residues: Translation initiation factor IF-2 (843 aa).

2 disordered regions span residues 55 to 185 (AEAV…EDRD) and 209 to 228 (KVEE…QVKV). A compositionally biased stretch (basic and acidic residues) spans 62–106 (PQEKPKKSAPKKEEKPKEEVKKEAEEKVAASKKEEEKPQEKKSVE). Residues 114–128 (LKKRRGLVIVKKKRP) show a composition bias toward basic residues. Positions 129-141 (KVEPKVEEKEAKQ) are enriched in basic and acidic residues. The span at 156–165 (LKRKPKKAKK) shows a compositional bias: basic residues. 2 stretches are compositionally biased toward basic and acidic residues: residues 171–185 (KKNE…EDRD) and 209–221 (KVEE…EPQK). Residues 342-511 (ERPPVITIMG…LLQAEIMELK (170 aa)) form the tr-type G domain. Residues 351-358 (GHVDHGKT) are G1. 351–358 (GHVDHGKT) is a binding site for GTP. A G2 region spans residues 376 to 380 (GITQH). Positions 397 to 400 (DTPG) are G3. Residues 397 to 401 (DTPGH) and 451 to 454 (NKID) each bind GTP. Positions 451–454 (NKID) are G4. The tract at residues 487-489 (SAK) is G5.

This sequence belongs to the TRAFAC class translation factor GTPase superfamily. Classic translation factor GTPase family. IF-2 subfamily.

Its subcellular location is the cytoplasm. One of the essential components for the initiation of protein synthesis. Protects formylmethionyl-tRNA from spontaneous hydrolysis and promotes its binding to the 30S ribosomal subunits. Also involved in the hydrolysis of GTP during the formation of the 70S ribosomal complex. The protein is Translation initiation factor IF-2 of Nitratiruptor sp. (strain SB155-2).